The chain runs to 636 residues: DNA-dependent metalloprotease SPRTN (636 aa).

Residues 19–42 are disordered; sequence QETPAAGWPDEDCPSSKRRRVDPS. A SprT-like domain is found at 76–183; sequence RAMFLQFNDK…ASGTNITIYH (108 aa). Residue H141 coordinates Zn(2+). The active site involves E142. 2 residues coordinate Zn(2+): H145 and H160. Disordered regions lie at residues 238–382 and 398–430; these read TYTK…GKQR and RGASAVGSSKSSTDASTADYRSNSALDAKPSGK. A compositionally biased stretch (basic and acidic residues) spans 241-268; it reads KIKEPENYGKTGKSDKQRDKMPATEMPK. Residues 272 to 281 are compositionally biased toward low complexity; that stretch reads PPSSTSSSGS. The SHP-box motif lies at 290-298; the sequence is FSGRGFVLG. Residues 302–311 are compositionally biased toward polar residues; that stretch reads QIPTNKQIQS. The segment covering 313-327 has biased composition (pro residues); sequence PKAPPEPLHSPPDSP. Positions 341–374 are enriched in polar residues; that stretch reads RLSSGTSNIPRKRSVGNTNAFINVNGSPVRISNG. Residues 399–416 are compositionally biased toward low complexity; it reads GASAVGSSKSSTDASTAD. A PIP-box motif is present at residues 451 to 458; it reads ESNISKYF. Residues 473 to 608 are disordered; the sequence is TFGSPQKSAI…VRDQQANNPP (136 aa). Polar residues-rich tracts occupy residues 492 to 523 and 545 to 554; these read FGSNQRPDSTSSGIRNTGSPQRSHASATSGSS and SPRTSGTTPS. The short motif at 535 to 566 is the Nuclear localization signal element; that stretch reads SNFPSPRNIGSPRTSGTTPSGAKKRSWEEHNS. Composition is skewed to basic and acidic residues over residues 559 to 570 and 584 to 593; these read RSWEEHNSERVF and TDKKREEVRS. A UBZ4-type zinc finger spans residues 612–636; sequence TVHCPVCHIRLPESTINDHLDSCLL. Residues C615, C618, H630, and C634 each coordinate Zn(2+).

It belongs to the Spartan family. In terms of assembly, homodimer. The cofactor is Zn(2+). In terms of processing, autocatalytically cleaved in response to double-stranded DNA-binding: autocatalytic cleavage takes place in trans and leads to inactivation.

Its subcellular location is the nucleus. It localises to the chromosome. Its activity is regulated as follows. DNA-binding activates the protease activity: single-stranded DNA-binding specifically activates ability to cleave covalent DNA-protein cross-links (DPCs). In contrast, double-stranded DNA-binding specifically activates autocatalytic cleavage, and subsequent inactivation. Its function is as follows. DNA-dependent metalloendopeptidase that mediates the proteolytic cleavage of covalent DNA-protein cross-links (DPCs) during DNA synthesis, thereby playing a key role in maintaining genomic integrity. DPCs are highly toxic DNA lesions that interfere with essential chromatin transactions, such as replication and transcription, and which are induced by reactive agents, such as UV light or formaldehyde. Associates with the DNA replication machinery and specifically removes DPCs during DNA synthesis. Catalyzes proteolytic cleavage of the hmces DNA-protein cross-link following unfolding by the brip1/fancj helicase. Acts as a pleiotropic protease for DNA-binding proteins cross-linked with DNA, such as top1, top2a, histones H3 and H4. Mediates degradation of DPCs that are not ubiquitinated, while it is not able to degrade ubiquitinated DPCs. SPRTN activation requires polymerase collision with DPCs followed by helicase bypass of DPCs. May also act as a 'reader' of ubiquitinated pcna: facilitates chromatin association of rad18 and is required for efficient pcna monoubiquitination, promoting a feed-forward loop to enhance pcna ubiquitination and translesion DNA synthesis. Acts as a regulator of translesion DNA synthesis by recruiting vcp/p97 to sites of DNA damage. The sequence is that of DNA-dependent metalloprotease SPRTN from Danio rerio (Zebrafish).